A 175-amino-acid chain; its full sequence is Large ribosomal subunit protein uL10 (175 aa).

It belongs to the universal ribosomal protein uL10 family. Part of the ribosomal stalk of the 50S ribosomal subunit. The N-terminus interacts with L11 and the large rRNA to form the base of the stalk. The C-terminus forms an elongated spine to which L12 dimers bind in a sequential fashion forming a multimeric L10(L12)X complex.

Forms part of the ribosomal stalk, playing a central role in the interaction of the ribosome with GTP-bound translation factors. The chain is Large ribosomal subunit protein uL10 from Synechococcus sp. (strain CC9311).